The primary structure comprises 61 residues: Small ribosomal subunit protein uS14 (61 aa).

Cysteine 24, cysteine 27, cysteine 40, and cysteine 43 together coordinate Zn(2+).

The protein belongs to the universal ribosomal protein uS14 family. Zinc-binding uS14 subfamily. Part of the 30S ribosomal subunit. Contacts proteins S3 and S10. Zn(2+) serves as cofactor.

In terms of biological role, binds 16S rRNA, required for the assembly of 30S particles and may also be responsible for determining the conformation of the 16S rRNA at the A site. This Ureaplasma parvum serovar 3 (strain ATCC 27815 / 27 / NCTC 11736) protein is Small ribosomal subunit protein uS14.